We begin with the raw amino-acid sequence, 427 residues long: UPF0761 membrane protein Cphamn1_1013 (427 aa).

Transmembrane regions (helical) follow at residues 51-71, 107-127, 147-167, 188-208, 218-238, and 251-271; these read LLSL…SPVF, TVPT…ISTI, FTLY…GLVA, ILSY…YMLV, AVSG…WFSF, and GALS…VVAL.

The protein belongs to the UPF0761 family.

The protein localises to the cell inner membrane. The polypeptide is UPF0761 membrane protein Cphamn1_1013 (Chlorobium phaeobacteroides (strain BS1)).